We begin with the raw amino-acid sequence, 153 residues long: UPF0756 membrane protein BCB4264_A4705 (153 aa).

Transmembrane regions (helical) follow at residues 8–28, 54–74, 87–107, and 117–137; these read FLFILLIIGLIAKNQSLTVAI, LGVTVITIAVLVPIATGEIGF, WIALASGVAVALLAKGGVQLL, and LVFGTVIAVALFNGVAVGPLI.

Belongs to the UPF0756 family.

It localises to the cell membrane. The protein is UPF0756 membrane protein BCB4264_A4705 of Bacillus cereus (strain B4264).